The chain runs to 257 residues: UPF0246 protein RSKD131_2757 (257 aa).

Belongs to the UPF0246 family.

The sequence is that of UPF0246 protein RSKD131_2757 from Cereibacter sphaeroides (strain KD131 / KCTC 12085) (Rhodobacter sphaeroides).